The sequence spans 310 residues: Glutaminase 1 (310 aa).

Residues serine 66, asparagine 117, glutamate 161, asparagine 168, tyrosine 192, tyrosine 244, and valine 262 each contribute to the substrate site. An N6-acetyllysine modification is found at lysine 294.

It belongs to the glutaminase family. As to quaternary structure, homotetramer.

It carries out the reaction L-glutamine + H2O = L-glutamate + NH4(+). The sequence is that of Glutaminase 1 from Escherichia coli O6:H1 (strain CFT073 / ATCC 700928 / UPEC).